Reading from the N-terminus, the 853-residue chain is DNA mismatch repair protein MutS (853 aa).

Gly614–Ser621 provides a ligand contact to ATP.

It belongs to the DNA mismatch repair MutS family.

Its function is as follows. This protein is involved in the repair of mismatches in DNA. It is possible that it carries out the mismatch recognition step. This protein has a weak ATPase activity. This chain is DNA mismatch repair protein MutS, found in Shigella dysenteriae serotype 1 (strain Sd197).